The sequence spans 689 residues: Putative ATP-dependent helicase IRC3 (689 aa).

The 166-residue stretch at 46–211 (NSIRQGTKRI…SMVMDKIVYH (166 aa)) folds into the Helicase ATP-binding domain. An ATP-binding site is contributed by 59–66 (LATGGGKT). Residues 158–161 (DEAH) carry the DEAH box motif. A Helicase C-terminal domain is found at 265–438 (ILKTYLHKKQ…KIDERLRALF (174 aa)).

It belongs to the helicase family. IRC3 subfamily.

The protein resides in the mitochondrion. This chain is Putative ATP-dependent helicase IRC3 (IRC3), found in Saccharomyces cerevisiae (strain ATCC 204508 / S288c) (Baker's yeast).